The chain runs to 337 residues: Protein SphX (337 aa).

The N-terminal stretch at 1–30 (MTTLKPALRRAAVLLPIAAVASSLFPIQEA) is a signal peptide.

It belongs to the PstS family. In terms of processing, the N-terminus is blocked.

Its subcellular location is the cell inner membrane. May be involved in the system for phosphate transport across the cytoplasmic membrane. This chain is Protein SphX (sphX), found in Synechococcus elongatus (strain ATCC 33912 / PCC 7942 / FACHB-805) (Anacystis nidulans R2).